Reading from the N-terminus, the 422-residue chain is Tyrosine--tRNA ligase (422 aa).

L-tyrosine is bound at residue Tyr-34. The 'HIGH' region signature appears at 39 to 48; sequence PTEDSLHVGH. 2 residues coordinate L-tyrosine: Tyr-172 and Gln-176. Positions 232-236 match the 'KMSKS' region motif; the sequence is KFGKT. Residue Lys-235 coordinates ATP. The S4 RNA-binding domain maps to 354–412; the sequence is KDLQEALVLSSLAQSRTQAKNMIISNSISINTKKIVNKNYIIDDNDKLFNQFTLLSRGK.

This sequence belongs to the class-I aminoacyl-tRNA synthetase family. TyrS type 1 subfamily. Homodimer.

It is found in the cytoplasm. The catalysed reaction is tRNA(Tyr) + L-tyrosine + ATP = L-tyrosyl-tRNA(Tyr) + AMP + diphosphate + H(+). In terms of biological role, catalyzes the attachment of tyrosine to tRNA(Tyr) in a two-step reaction: tyrosine is first activated by ATP to form Tyr-AMP and then transferred to the acceptor end of tRNA(Tyr). The sequence is that of Tyrosine--tRNA ligase from Buchnera aphidicola subsp. Schizaphis graminum (strain Sg).